We begin with the raw amino-acid sequence, 259 residues long: MAYFSGLSDALRLTFVQIMILSAIAVVIFLYGMIGNFQKWGAGVTGYALEPPTGKKGSAIRFLKTWWAQVRAESHHHGKPILEVLILDIFFQRRILKRSPIRWFMHFTIFAGWMSLFALSGLMFAVEMTEKIGIELPFTPAEFREMLSLPNYIFGYILLIGVMIAVVRRLFVSEVREASIMYDWVLLGGVFIVTISGFIADGIRTGIIWGFGLDPVTAPPAALFHSVISLLFCIAYIPYSKYIHVIATPLAILANKGGE.

5 helical membrane-spanning segments follow: residues 15 to 35, 104 to 124, 147 to 167, 180 to 200, and 218 to 238; these read FVQIMILSAIAVVIFLYGMIG, FMHFTIFAGWMSLFALSGLMF, LSLPNYIFGYILLIGVMIAVV, IMYDWVLLGGVFIVTISGFIA, and APPAALFHSVISLLFCIAYIP.

This sequence belongs to the HdrE family. As to quaternary structure, the dihydromethanophenazine:CoB--CoM heterodisulfide reductase is composed of two subunits; HdrD and HdrE. It depends on heme b as a cofactor.

Its subcellular location is the cell membrane. The catalysed reaction is methanophenazine + coenzyme B + coenzyme M = dihydromethanophenazine + coenzyme M-coenzyme B heterodisulfide. Its pathway is cofactor metabolism; coenzyme M-coenzyme B heterodisulfide reduction; coenzyme B and coenzyme M from coenzyme M-coenzyme B heterodisulfide: step 1/1. In terms of biological role, part of a complex that catalyzes the reversible reduction of CoM-S-S-CoB to the thiol-coenzymes H-S-CoM (coenzyme M) and H-S-CoB (coenzyme B). HdrE may be responsible for anchoring the complex to the membrane. This chain is Dihydromethanophenazine:CoB--CoM heterodisulfide reductase subunit E (hdrE), found in Methanosarcina mazei (strain ATCC BAA-159 / DSM 3647 / Goe1 / Go1 / JCM 11833 / OCM 88) (Methanosarcina frisia).